We begin with the raw amino-acid sequence, 156 residues long: Small ribosomal subunit protein uS7 (156 aa).

Part of the 30S ribosomal subunit. Contacts proteins S9 and S11.

In terms of biological role, one of the primary rRNA binding proteins, it binds directly to 16S rRNA where it nucleates assembly of the head domain of the 30S subunit. Is located at the subunit interface close to the decoding center, probably blocks exit of the E-site tRNA. This Rhodopseudomonas palustris (strain ATCC BAA-98 / CGA009) protein is Small ribosomal subunit protein uS7.